Reading from the N-terminus, the 292-residue chain is 5,10-methylenetetrahydrofolate reductase (292 aa).

The active-site Proton donor/acceptor is E26. T57 lines the NADH pocket. FAD is bound by residues Y58, A60, H86, R116, G117, D118, A130, Y150, H154, A157, D163, N166, R169, and K170. D118 contacts (6S)-5-methyl-5,6,7,8-tetrahydrofolate. Residue Q181 coordinates NADH. (6S)-5-methyl-5,6,7,8-tetrahydrofolate contacts are provided by Q181, Q217, and R277.

Belongs to the methylenetetrahydrofolate reductase family. Requires FAD as cofactor.

The enzyme catalyses (6S)-5-methyl-5,6,7,8-tetrahydrofolate + NAD(+) = (6R)-5,10-methylene-5,6,7,8-tetrahydrofolate + NADH + H(+). Its pathway is one-carbon metabolism; tetrahydrofolate interconversion. It functions in the pathway amino-acid biosynthesis; L-methionine biosynthesis via de novo pathway. In terms of biological role, catalyzes the NADH-dependent reduction of 5,10-methylenetetrahydrofolate to 5-methyltetrahydrofolate. Is required to provide the methyl group necessary for methionine synthetase to convert homocysteine to methionine; the methyl group is given by 5-methyltetrahydrofolate. This Haemophilus influenzae (strain ATCC 51907 / DSM 11121 / KW20 / Rd) protein is 5,10-methylenetetrahydrofolate reductase (metF).